We begin with the raw amino-acid sequence, 760 residues long: Phosphoribosylformylglycinamidine synthase subunit PurL (760 aa).

Residues Met-1–Gln-25 form a disordered region. His-69 is a catalytic residue. Residues Tyr-72 and Lys-115 each contribute to the ATP site. Mg(2+) is bound at residue Glu-117. Residues Ser-118–His-121 and Arg-140 contribute to the substrate site. Residue His-119 is the Proton acceptor of the active site. Asp-141 contacts Mg(2+). Gln-265 lines the substrate pocket. Asp-293 is a binding site for Mg(2+). Glu-337–Gln-339 is a substrate binding site. Residues Asn-519 and Gly-556 each coordinate ATP. Residue Asn-557 participates in Mg(2+) binding. Ser-559 is a substrate binding site.

Belongs to the FGAMS family. Monomer. Part of the FGAM synthase complex composed of 1 PurL, 1 PurQ and 2 PurS subunits.

It is found in the cytoplasm. The enzyme catalyses N(2)-formyl-N(1)-(5-phospho-beta-D-ribosyl)glycinamide + L-glutamine + ATP + H2O = 2-formamido-N(1)-(5-O-phospho-beta-D-ribosyl)acetamidine + L-glutamate + ADP + phosphate + H(+). The protein operates within purine metabolism; IMP biosynthesis via de novo pathway; 5-amino-1-(5-phospho-D-ribosyl)imidazole from N(2)-formyl-N(1)-(5-phospho-D-ribosyl)glycinamide: step 1/2. In terms of biological role, part of the phosphoribosylformylglycinamidine synthase complex involved in the purines biosynthetic pathway. Catalyzes the ATP-dependent conversion of formylglycinamide ribonucleotide (FGAR) and glutamine to yield formylglycinamidine ribonucleotide (FGAM) and glutamate. The FGAM synthase complex is composed of three subunits. PurQ produces an ammonia molecule by converting glutamine to glutamate. PurL transfers the ammonia molecule to FGAR to form FGAM in an ATP-dependent manner. PurS interacts with PurQ and PurL and is thought to assist in the transfer of the ammonia molecule from PurQ to PurL. This is Phosphoribosylformylglycinamidine synthase subunit PurL from Tropheryma whipplei (strain TW08/27) (Whipple's bacillus).